The chain runs to 483 residues: M protein, serotype 6 (483 aa).

The signal sequence occupies residues 1–42 (MAKNNTNRHYSLRKLKKGTASVAVALSVIGAGLVVNTNEVSA). Positions 54–171 (DKARELLNKY…IGTLKKTLDE (118 aa)) form a coiled coil. 8 repeat units span residues 69 to 75 (MLQANND), 76 to 82 (KLTTENN), 83 to 89 (NLTDQNK), 90 to 96 (NLTTENK), 97 to 103 (NLTDQNK), 104 to 110 (NLTTENK), 111 to 117 (NLTDQNK), and 118 to 124 (NLTTENK). The 10 X 7 AA approximate tandem repeats of [KMNR]-L-[TQ]-[TDA]-[ENQ]-N-[NDK] stretch occupies residues 69-138 (MLQANNDKLT…EENRLTTENK (70 aa)). A compositionally biased stretch (polar residues) spans 74 to 87 (NDKLTTENNNLTDQ). Residues 74–157 (NDKLTTENNN…EEEAANKERE (84 aa)) are disordered. The segment covering 88-113 (NKNLTTENKNLTDQNKNLTTENKNLT) has biased composition (low complexity). 2 stretches are compositionally biased toward basic and acidic residues: residues 122–135 (ENKE…RLTT) and 143–157 (KLSE…KERE). A 9-1; approximate repeat occupies 125-131 (ELKAEEN). A run of 5 repeats spans residues 132-138 (RLTTENK), 157-181 (ENKE…AKEQ), 182-206 (ESKE…AKEQ), 207-231 (ESKE…AKEQ), and 232-256 (ESKE…AREQ). Positions 157–269 (ENKEAIGTLK…QDIGALKQEL (113 aa)) are 4.5 X 25 AA tandem repeats of E-[NS]-K-E-[TA]-I-G-T-L-K-K-[TI]-L-D-E-T-V-K-D-K-I-A-[KR]-E-Q. Disordered stretches follow at residues 255–298 (EQKS…EAKK) and 314–345 (VKEE…VEKA). Residues 257 to 269 (KSKQDIGALKQEL) form a 5-2; truncated repeat. Composition is skewed to basic and acidic residues over residues 268 to 298 (ELAK…EAKK) and 328 to 345 (LRRD…VEKA). C repeat units follow at residues 270 to 304 (AKKD…EKDL) and 312 to 346 (DKVK…EKAL). The binding to CD46 stretch occupies residues 279–347 (SEASRKGLRR…AKKQVEKALE (69 aa)). The segment at 279-347 (SEASRKGLRR…AKKQVEKALE (69 aa)) is two directly repeated 27 amino acid blocks separated by 15 amino acids. Residues 280-408 (EASRKGLRRD…LAKLRAGKAS (129 aa)) are a coiled coil. Residues 348-411 (EANSKLAALE…LRAGKASDSQ (64 aa)) are hydrophilic. D repeat units lie at residues 379 to 384 (AKLEAE), 385 to 390 (AKALKE), 393 to 398 (AKQAEE), and 400 to 405 (AKLRAG). The tract at residues 400–455 (AKLRAGKASDSQTPDAKPGNKVVPGKGQAPQAGTKPNQNKAPMKETKRQLPSTGET) is disordered. The LPXTG sorting signal motif lies at 449–453 (LPSTG). Thr452 is modified (pentaglycyl murein peptidoglycan amidated threonine). Residues 453–483 (GETANPFFTAAALTVMATAGVAAVVKRKEEN) constitute a propeptide, removed by sortase.

The protein belongs to the M protein family.

The protein resides in the secreted. The protein localises to the cell wall. Its function is as follows. Mediates the attachment of S.pyogenes to skin epithelial cells through the binding of the human membrane cofactor protein CD46. Also binds to the factor H and factor H-like protein 1. These interactions could contribute to the fact that the M6 protein protects the bacterium from the phagocytosis by regulating the complement activation on the bacterial surface. The sequence is that of M protein, serotype 6 (emm6) from Streptococcus pyogenes.